A 452-amino-acid chain; its full sequence is Phosphatidylserine synthase 2 (452 aa).

Residues 1–35 (MAKGEWKRSGADDLPLPGRSECEVFDDGTNTFFWR) lie on the Cytoplasmic side of the membrane. Residues 36-56 (AHTVTVLFILTCALVYVTLLE) traverse the membrane as a helical segment. Residues 57 to 69 (ETPHDTAYNTKRG) are Lumenal-facing. A helical transmembrane segment spans residues 70–90 (IVASILVFLCFGVTQAKDGPF). At 91–99 (TRPHPAYWR) the chain is on the cytoplasmic side. Residues 100 to 120 (FWLCVSVVYELFLIFILFQTV) traverse the membrane as a helical segment. Residues 121 to 286 (HDGRQFMKYI…EWRPASNLRR (166 aa)) lie on the Lumenal side of the membrane. A helical transmembrane segment spans residues 287 to 307 (WLAVLGIIFMFLLAELNTFYL). Residue K308 is a topological domain, cytoplasmic. A helical membrane pass occupies residues 309–329 (FVMWMPPEHYLVLFRLVFFVN). At 330–349 (VGGVAMREIYDFMDDPKFHK) the chain is on the lumenal side. A helical transmembrane segment spans residues 350-370 (KLGQQAWIVAAITVTEFLIVV). At 371-376 (KYDPNT) the chain is on the cytoplasmic side. The helical transmembrane segment at 377–397 (IMLPIPFFITQCWILGIALIL) threads the bilayer. Residues 398-452 (VWTLWRFFIRDITLRYKETRRRRQEVSSERDGSSSAPSGRSKLNGSMDSVRHRKS) are Lumenal-facing. Residues 419–452 (RRQEVSSERDGSSSAPSGRSKLNGSMDSVRHRKS) are disordered. Positions 430-444 (SSSAPSGRSKLNGSM) are enriched in polar residues.

Belongs to the phosphatidyl serine synthase family.

It localises to the endoplasmic reticulum membrane. It carries out the reaction a 1,2-diacyl-sn-glycero-3-phosphoethanolamine + L-serine = a 1,2-diacyl-sn-glycero-3-phospho-L-serine + ethanolamine. The catalysed reaction is 1-hexadecanoyl-2-(9Z-octadecenoyl)-sn-glycero-3-phosphoethanolamine + L-serine = 1-hexadecanoyl-2-(9Z-octadecenoyl)-sn-glycero-3-phospho-L-serine + ethanolamine. The enzyme catalyses 1-hexadecanoyl-2-(4Z,7Z,10Z,13Z,16Z,19Z-docosahexaenoyl)-sn-glycero-3-phosphoethanolamine + L-serine = 1-hexadecanoyl-2-(4Z,7Z,10Z,13Z,16Z,19Z-docosahexaenoyl)-sn-glycero-3-phosphoserine + ethanolamine. It catalyses the reaction 1-octadecanoyl-2-(5Z,8Z,11Z,14Z)-eicosatetraenoyl-sn-glycero-3-phosphoethanolamine + L-serine = 1-octadecanoyl-2-(5Z,8Z,11Z,14Z)-eicosatetraenoyl-sn-glycero-3-phosphoserine + ethanolamine. It carries out the reaction 1-octadecanoyl-2-(4Z,7Z,10Z,13Z,16Z,19Z-docosahexaenoyl)-sn-glycero-3-phosphoethanolamine + L-serine = 1-octadecanoyl-2-(4Z,7Z,10Z,13Z,16Z,19Z-docosahexaenoyl)-sn-glycero-3-phosphoserine + ethanolamine. The catalysed reaction is 1-(1Z-octadecenyl)-2-(4Z,7Z,10Z,13Z,16Z,19Z-docosahexaenoyl)-sn-glycero-3-phosphoethanolamine + L-serine = 1-(1Z-octadecenyl)-2-(4Z,7Z,10Z,13Z,16Z,19Z-docosahexaenoyl)-sn-glycero-3-phospho-L-serine + ethanolamine. The enzyme catalyses 1-octadecanoyl-2-(9Z-octadecenoyl)-sn-glycero-3-phosphoethanolamine + L-serine = 1-octadecanoyl-2-(9Z-octadecenoyl)-sn-glycero-3-phospho-L-serine + ethanolamine. It catalyses the reaction 1-(1Z-octadecenyl)-2-(9Z-octadecenoyl)-sn-glycero-3-phosphoethanolamine + L-serine = 1-(1Z-octadecenyl)-2-(9Z-octadecenoyl)-sn-glycero-3-phospho-L-serine + ethanolamine. It carries out the reaction 1-(1Z-octadecenyl)-2-(5Z,8Z,11Z,14Z- eicosatetraenoyl)-sn-glycero-3-phosphoethanolamine + L-serine = 1-(1Z-octadecenyl)-2-(5Z,8Z,11Z,14Z-eicosatetraenoyl)-sn-glycero-3-phospho-L-serine + ethanolamine. It participates in phospholipid metabolism; phosphatidylserine biosynthesis. Functionally, catalyzes a base-exchange reaction in which the polar head group of phosphatidylethanolamine (PE) or phosphatidylcholine (PC) is replaced by L-serine. Catalyzes the conversion of phosphatatidylethanolamine and does not act on phosphatidylcholine. Can utilize both phosphatidylethanolamine (PE) plasmalogen and diacyl PE as substrate and the latter is six times better utilized, indicating the importance of an ester linkage at the sn-1 position. Although it shows no sn-1 fatty acyl preference, exhibits significant preference towards docosahexaenoic acid (22:6n-3) compared with 18:1 or 20:4 at the sn-2 position. In Danio rerio (Zebrafish), this protein is Phosphatidylserine synthase 2 (ptdss2).